The following is a 131-amino-acid chain: Protein GLUTAMINE DUMPER 5 (131 aa).

The Extracellular segment spans residues 1 to 34; the sequence is MRQFPSIRGNINEKMMTTMVESQTRSPWRTPVPY. The chain crosses the membrane as a helical span at residues 35–55; that stretch reads LFGGLAAMLGLIAFALLLLAC. Topologically, residues 56–131 are cytoplasmic; the sequence is SYWRLSRQTE…GESKVTEENH (76 aa). Positions 88–92 match the VIMAG motif; sequence VIMAG.

This sequence belongs to the GLUTAMINE DUMPER 1 (TC 9.B.60) family. Expressed in the vascular tissues. Also detected in guard cells.

The protein resides in the membrane. In terms of biological role, probable subunit of an amino acid transporter involved in the regulation of the amino acid metabolism. Stimulates amino acid export by activating nonselective amino acid facilitators. The sequence is that of Protein GLUTAMINE DUMPER 5 (GDU5) from Arabidopsis thaliana (Mouse-ear cress).